A 359-amino-acid polypeptide reads, in one-letter code: Probable NAD(P)H nitroreductase PigM (359 aa).

The protein belongs to the nitroreductase family. It depends on FMN as a cofactor.

The protein operates within antibiotic biosynthesis; prodigiosin biosynthesis. In terms of biological role, involved in the biosynthesis of 4-methoxy-2,2'-bipyrrole-5-carbaldehyde (MBC), one of the terminal products involved in the biosynthesis of the red antibiotic prodigiosin (Pig). Catalyzes the oxidation of the hydroxy group of 4-hydroxy-2,2'-bipyrrole-5-methanol (HBM) to yield 4-methoxy-2,2'-bipyrrole-5-carbaldehyde (MBC). The sequence is that of Probable NAD(P)H nitroreductase PigM from Serratia sp. (strain ATCC 39006) (Prodigiosinella confusarubida).